The primary structure comprises 208 residues: Small ribosomal subunit protein uS4 (208 aa).

Residues 98–161 (RRLDNVVYRM…KSNPQVVRAM (64 aa)) enclose the S4 RNA-binding domain.

Belongs to the universal ribosomal protein uS4 family. In terms of assembly, part of the 30S ribosomal subunit. Contacts protein S5. The interaction surface between S4 and S5 is involved in control of translational fidelity.

One of the primary rRNA binding proteins, it binds directly to 16S rRNA where it nucleates assembly of the body of the 30S subunit. In terms of biological role, with S5 and S12 plays an important role in translational accuracy. This Helicobacter acinonychis (strain Sheeba) protein is Small ribosomal subunit protein uS4.